Reading from the N-terminus, the 227-residue chain is Class I hydrophobin 4 (227 aa).

The signal sequence occupies residues 1–18; sequence MQFTTFALLAVAAATASA. Cystine bridges form between cysteine 159/cysteine 207, cysteine 167/cysteine 200, cysteine 168/cysteine 186, and cysteine 208/cysteine 222. N-linked (GlcNAc...) asparagine glycosylation is found at asparagine 190 and asparagine 219.

It belongs to the fungal hydrophobin family. Self-assembles to form functional amyloid fibrils called rodlets. Self-assembly into fibrillar rodlets occurs spontaneously at hydrophobic:hydrophilic interfaces and the rodlets further associate laterally to form amphipathic monolayers. As to expression, expressed in conidia and aerial hyphae.

The protein localises to the secreted. The protein resides in the cell wall. Its function is as follows. Aerial growth, conidiation, and dispersal of filamentous fungi in the environment rely upon a capability of their secreting small amphipathic proteins called hydrophobins (HPBs) with low sequence identity. Class I can self-assemble into an outermost layer of rodlet bundles on aerial cell surfaces, conferring cellular hydrophobicity that supports fungal growth, development and dispersal; whereas Class II form highly ordered films at water-air interfaces through intermolecular interactions but contribute nothing to the rodlet structure. Hcf-4 is a class I hydrophobin that is involved in the development and germination of conidia. The polypeptide is Class I hydrophobin 4 (Passalora fulva (Tomato leaf mold)).